Here is a 376-residue protein sequence, read N- to C-terminus: ATP phosphoribosyltransferase regulatory subunit (376 aa).

The protein belongs to the class-II aminoacyl-tRNA synthetase family. HisZ subfamily. As to quaternary structure, heteromultimer composed of HisG and HisZ subunits.

The protein resides in the cytoplasm. Its pathway is amino-acid biosynthesis; L-histidine biosynthesis; L-histidine from 5-phospho-alpha-D-ribose 1-diphosphate: step 1/9. Functionally, required for the first step of histidine biosynthesis. May allow the feedback regulation of ATP phosphoribosyltransferase activity by histidine. This chain is ATP phosphoribosyltransferase regulatory subunit, found in Brucella anthropi (strain ATCC 49188 / DSM 6882 / CCUG 24695 / JCM 21032 / LMG 3331 / NBRC 15819 / NCTC 12168 / Alc 37) (Ochrobactrum anthropi).